Reading from the N-terminus, the 189-residue chain is Apolipoprotein D (189 aa).

A signal peptide spans 1 to 21 (MAPTLLLLLPALAGLISVAQG). Gln-22 carries the post-translational modification Pyrrolidone carboxylic acid. 2 disulfide bridges follow: Cys-29–Cys-135 and Cys-62–Cys-186. 2 N-linked (GlcNAc...) asparagine glycosylation sites follow: Asn-66 and Asn-99.

It belongs to the calycin superfamily. Lipocalin family. In terms of assembly, homodimer. As to expression, most heavily expressed in adrenal gland, lung, brain, testis and spleen.

It localises to the secreted. Functionally, APOD occurs in the macromolecular complex with lecithin-transport and binding of bilin. Appears to be able to transport a variety of ligands in a number of different contexts. The chain is Apolipoprotein D (APOD) from Oryctolagus cuniculus (Rabbit).